The chain runs to 182 residues: Orotate phosphoribosyltransferase (182 aa).

Residues arginine 93, lysine 94, lysine 97, and 119–127 (EDIATTGTS) contribute to the 5-phospho-alpha-D-ribose 1-diphosphate site. Orotate-binding residues include threonine 123 and arginine 151.

It belongs to the purine/pyrimidine phosphoribosyltransferase family. PyrE subfamily. In terms of assembly, homodimer. The cofactor is Mg(2+).

The catalysed reaction is orotidine 5'-phosphate + diphosphate = orotate + 5-phospho-alpha-D-ribose 1-diphosphate. The protein operates within pyrimidine metabolism; UMP biosynthesis via de novo pathway; UMP from orotate: step 1/2. Catalyzes the transfer of a ribosyl phosphate group from 5-phosphoribose 1-diphosphate to orotate, leading to the formation of orotidine monophosphate (OMP). This Haloquadratum walsbyi (strain DSM 16790 / HBSQ001) protein is Orotate phosphoribosyltransferase.